The sequence spans 562 residues: Potassium-transporting ATPase potassium-binding subunit (562 aa).

Helical transmembrane passes span 5–25, 63–83, 132–152, 175–195, 250–270, 279–299, 327–347, 356–376, 379–399, 416–436, 483–503, and 526–546; these read AFLL…PLGS, AAAI…LLMA, GLTV…FALI, LYVL…QGVL, LSNI…CFAF, QGHA…AVVM, FGVL…TGAV, ALGG…FGGV, GLYG…LMIG, MTAL…ALAL, VLLA…VLAI, and LFIG…FIPA.

It belongs to the KdpA family. The system is composed of three essential subunits: KdpA, KdpB and KdpC.

The protein localises to the cell inner membrane. In terms of biological role, part of the high-affinity ATP-driven potassium transport (or Kdp) system, which catalyzes the hydrolysis of ATP coupled with the electrogenic transport of potassium into the cytoplasm. This subunit binds the periplasmic potassium ions and delivers the ions to the membrane domain of KdpB through an intramembrane tunnel. This chain is Potassium-transporting ATPase potassium-binding subunit, found in Pectobacterium carotovorum subsp. carotovorum (strain PC1).